The chain runs to 491 residues: UDP-GalNAc:beta-1,3-N-acetylgalactosaminyltransferase 2 (491 aa).

Residues 1–2 (MR) are Cytoplasmic-facing. The chain crosses the membrane as a helical; Signal-anchor for type II membrane protein span at residues 3–23 (SAAAALSVCVLAVLLHWICWT). At 24 to 491 (DRSAELLGFR…NKCGDPCGCS (468 aa)) the chain is on the lumenal side. 2 N-linked (GlcNAc...) asparagine glycosylation sites follow: asparagine 167 and asparagine 230.

It belongs to the glycosyltransferase 31 family.

It localises to the golgi apparatus membrane. Its subcellular location is the endoplasmic reticulum. It carries out the reaction 3-O-(N-acetyl-beta-D-glucosaminyl-(1-&gt;4)-alpha-D-mannosyl)-L-threonyl-[protein] + UDP-N-acetyl-alpha-D-galactosamine = 3-O-[beta-D-GalNAc-(1-&gt;3)-beta-D-GlcNAc-(1-&gt;4)-alpha-D-Man]-L-Thr-[protein] + UDP + H(+). Its pathway is protein modification; protein glycosylation. Its function is as follows. Beta-1,3-N-acetylgalactosaminyltransferase that synthesizes a unique carbohydrate structure, GalNAc-beta-1-3GlcNAc, on N- and O-glycans. Has no galactose nor galactosaminyl transferase activity toward any acceptor substrate. Involved in alpha-dystroglycan (dag1) glycosylation. The chain is UDP-GalNAc:beta-1,3-N-acetylgalactosaminyltransferase 2 (b3galnt2) from Danio rerio (Zebrafish).